Reading from the N-terminus, the 350-residue chain is Quinone oxidoreductase-like protein 2 (350 aa).

The residue at position 36 (Lys36) is an N6-acetyllysine. The residue at position 201 (Lys201) is an N6-succinyllysine. 2 positions are modified to N6-acetyllysine: Lys302 and Lys328.

Belongs to the zinc-containing alcohol dehydrogenase family. Quinone oxidoreductase subfamily.

The protein is Quinone oxidoreductase-like protein 2 of Rattus norvegicus (Rat).